A 152-amino-acid polypeptide reads, in one-letter code: Nucleoside diphosphate kinase (152 aa).

The ATP site is built by lysine 11, phenylalanine 59, arginine 87, threonine 93, arginine 104, and asparagine 114. Catalysis depends on histidine 117, which acts as the Pros-phosphohistidine intermediate.

Belongs to the NDK family. As to quaternary structure, homotetramer. Mg(2+) is required as a cofactor.

The protein localises to the cytoplasm. The catalysed reaction is a 2'-deoxyribonucleoside 5'-diphosphate + ATP = a 2'-deoxyribonucleoside 5'-triphosphate + ADP. It carries out the reaction a ribonucleoside 5'-diphosphate + ATP = a ribonucleoside 5'-triphosphate + ADP. Its function is as follows. Major role in the synthesis of nucleoside triphosphates other than ATP. The ATP gamma phosphate is transferred to the NDP beta phosphate via a ping-pong mechanism, using a phosphorylated active-site intermediate. The sequence is that of Nucleoside diphosphate kinase from Prochlorococcus marinus subsp. pastoris (strain CCMP1986 / NIES-2087 / MED4).